A 294-amino-acid chain; its full sequence is IVFRAAQERSDIEIVAINDLLDAEYMAYMLKYDSTHGRFNGTVEVKDGHLIVNGKKIRVTAERDPANLKWNEAGVEVVAEATGLFLTDETARKHITAGAKKVVMTGPSKDSTPMFVRGANFDTYAGQDIVSNASCTTNCLAPLAKVVNDNFGIVEALMTTVHATTATQKTVDGPSHKDWRGGRGASQNIIPSSTGAAKAVGKVLPELNGKLTGMAFRVPTPNVSVVDLTVRLAKPATYEEIKKAMKAASEGAMKGVLGYTEDDVVSTDFNGETCTSVFDAKAGIALNDNFVKLV.

Positions 19, 63, and 105 each coordinate NAD(+). Residues 134–136, Thr-165, 194–195, and Arg-217 contribute to the D-glyceraldehyde 3-phosphate site; these read SCT and TG. Cys-135 (nucleophile) is an active-site residue.

This sequence belongs to the glyceraldehyde-3-phosphate dehydrogenase family. Homotetramer.

It is found in the cytoplasm. The enzyme catalyses D-glyceraldehyde 3-phosphate + phosphate + NAD(+) = (2R)-3-phospho-glyceroyl phosphate + NADH + H(+). It participates in carbohydrate degradation; glycolysis; pyruvate from D-glyceraldehyde 3-phosphate: step 1/5. In terms of biological role, catalyzes the oxidative phosphorylation of glyceraldehyde 3-phosphate (G3P) to 1,3-bisphosphoglycerate (BPG) using the cofactor NAD. The first reaction step involves the formation of a hemiacetal intermediate between G3P and a cysteine residue, and this hemiacetal intermediate is then oxidized to a thioester, with concomitant reduction of NAD to NADH. The reduced NADH is then exchanged with the second NAD, and the thioester is attacked by a nucleophilic inorganic phosphate to produce BPG. The sequence is that of Glyceraldehyde-3-phosphate dehydrogenase (gap) from Shimwellia blattae (Escherichia blattae).